A 1939-amino-acid polypeptide reads, in one-letter code: Myosin-2 (1939 aa).

Positions 33-82 constitute a Myosin N-terminal SH3-like domain; that stretch reads DAKTSVFVAEPKESFVKGTIQSREGGKVTVKTEAGATLTVKEDQVFPMNP. Phosphothreonine occurs at positions 64 and 69. Residues 86 to 782 form the Myosin motor domain; the sequence is DKIEDMAMMT…LLGLLEEMRD (697 aa). At Lys-130 the chain carries N6,N6,N6-trimethyllysine. An ATP-binding site is contributed by 179–186; sequence GESGAGKT. The residue at position 389 (Tyr-389) is a Phosphotyrosine. Ser-392 carries the phosphoserine modification. A Phosphothreonine modification is found at Thr-419. Ser-625 carries the phosphoserine modification. Residues 659–681 are actin-binding; the sequence is LNKLMTNLRSTHPHFVRCIIPNE. His-757 is subject to Pros-methylhistidine. The interval 761–775 is actin-binding; the sequence is KFGHTKVFFKAGLLG. The 30-residue stretch at 785-814 folds into the IQ domain; that stretch reads LAQLITRTQARCRGFLARVEYQKMVERRES. Residues 843 to 1939 adopt a coiled-coil conformation; it reads LLKSAESEKE…EVHTKVISEE (1097 aa). A phosphoserine mark is found at Ser-1092 and Ser-1096. Disordered regions lie at residues 1126–1147 and 1153–1172; these read IEAERASRAKAEKQRSDLSREL and RLEEAGGATSAQIEMNKKRE. Over residues 1128 to 1147 the composition is skewed to basic and acidic residues; sequence AERASRAKAEKQRSDLSREL. Residues Ser-1162 and Ser-1237 each carry the phosphoserine modification. A Phosphothreonine modification is found at Thr-1241. Ser-1243 carries the post-translational modification Phosphoserine. Thr-1255 bears the Phosphothreonine mark. The residue at position 1261 (Ser-1261) is a Phosphoserine. Residue Thr-1286 is modified to Phosphothreonine. A phosphoserine mark is found at Ser-1288, Ser-1292, Ser-1303, and Ser-1306. Phosphotyrosine is present on Tyr-1464. At Thr-1467 the chain carries Phosphothreonine. Position 1474 is a phosphoserine (Ser-1474). Residue Tyr-1492 is modified to Phosphotyrosine. The residue at position 1495 (Ser-1495) is a Phosphoserine. Position 1501 is a phosphothreonine (Thr-1501). Ser-1514 carries the post-translational modification Phosphoserine. Thr-1517 carries the post-translational modification Phosphothreonine. Ser-1542, Ser-1554, Ser-1574, Ser-1600, Ser-1603, Ser-1714, and Ser-1726 each carry phosphoserine. 2 positions are modified to phosphothreonine: Thr-1730 and Thr-1736. Position 1739 is a phosphoserine (Ser-1739). A disordered region spans residues 1885–1915; that stretch reads QAEEAEEQSNTNLSKFRKLQHELEEAEERAD.

Belongs to the TRAFAC class myosin-kinesin ATPase superfamily. Myosin family. As to quaternary structure, muscle myosin is a hexameric protein that consists of 2 heavy chain subunits (MHC), 2 alkali light chain subunits (MLC) and 2 regulatory light chain subunits (MLC-2). Interacts with GCSAM.

It is found in the cytoplasm. The protein resides in the myofibril. In terms of biological role, myosins are actin-based motor molecules with ATPase activity essential for muscle contraction. This Sus scrofa (Pig) protein is Myosin-2 (MYH2).